We begin with the raw amino-acid sequence, 504 residues long: Maturase K (504 aa).

Belongs to the intron maturase 2 family. MatK subfamily.

It localises to the plastid. The protein localises to the chloroplast. Its function is as follows. Usually encoded in the trnK tRNA gene intron. Probably assists in splicing its own and other chloroplast group II introns. In Rorippa amphibia (Great yellow-cress), this protein is Maturase K.